A 176-amino-acid chain; its full sequence is Interleukin-7 (176 aa).

A signal peptide spans 1–25; the sequence is MFHVSFRYIFGIPPLILVLLPVASS. 3 cysteine pairs are disulfide-bonded: Cys27–Cys165, Cys58–Cys153, and Cys71–Cys116. N-linked (GlcNAc...) asparagine glycosylation is found at Asn94, Asn115, and Asn140.

It belongs to the IL-7/IL-9 family.

The protein resides in the secreted. Its function is as follows. Hematopoietic growth factor capable of stimulating the proliferation of lymphoid progenitors. It is important for proliferation during certain stages of B-cell maturation. This chain is Interleukin-7 (IL7), found in Sus scrofa (Pig).